The sequence spans 121 residues: Ribonuclease P protein component 4 (121 aa).

The Zn(2+) site is built by Cys-63, Cys-66, Cys-89, and Cys-92.

Belongs to the eukaryotic/archaeal RNase P protein component 4 family. In terms of assembly, consists of a catalytic RNA component and at least 4-5 protein subunits. Zn(2+) is required as a cofactor.

The protein localises to the cytoplasm. The enzyme catalyses Endonucleolytic cleavage of RNA, removing 5'-extranucleotides from tRNA precursor.. Part of ribonuclease P, a protein complex that generates mature tRNA molecules by cleaving their 5'-ends. The sequence is that of Ribonuclease P protein component 4 from Methanobrevibacter smithii (strain ATCC 35061 / DSM 861 / OCM 144 / PS).